We begin with the raw amino-acid sequence, 389 residues long: Large ribosomal subunit protein uL3 (389 aa).

Residues 1-36 (MSHRKFEHPRHGSLGFLPRKRSSRHRGKVKSFPKDD) are disordered. The span at 18 to 31 (PRKRSSRHRGKVKS) shows a compositional bias: basic residues.

It belongs to the universal ribosomal protein uL3 family.

The protein localises to the cytoplasm. Its function is as follows. The L3 protein is a component of the large subunit of cytoplasmic ribosomes. This chain is Large ribosomal subunit protein uL3 (RPL3), found in Oryza sativa subsp. japonica (Rice).